We begin with the raw amino-acid sequence, 1027 residues long: Circadian locomoter output cycles protein kaput (1027 aa).

Positions 15 to 65 constitute a bHLH domain; it reads LCRKSRNLSEKKRRDQFNSLVNDLSALISTSSRKMDKSTVLKSTIAFLKNH. 2 consecutive PAS domains span residues 88 to 160 and 255 to 321; these read NDEY…VIEP and REMS…ELRQ. Disordered stretches follow at residues 377–402, 443–575, 765–800, 869–911, and 926–1027; these read RKEG…ASTG, TSPA…QQLQ, QQMM…TQQQ, TINP…NNED, and SINF…GSSQ. Positions 383–402 are enriched in low complexity; sequence SGNSNSITNNGSSKVIASTG. Residues 443–486 show a composition bias toward polar residues; it reads TSPAVDSSPMWSASAVQPSGSCQINPLKTSRPASSYGNISSTGI. 2 stretches are compositionally biased toward low complexity: residues 504 to 516 and 552 to 575; these read SDST…SVTS and QQQQ…QQLQ. Residues 780–1027 form an implicated in the circadian rhythmicity region; it reads QHNLQQQHQS…SPHTAPGSSQ (248 aa). Composition is skewed to low complexity over residues 871 to 909 and 951 to 995; these read NPFN…QNNN and SGSN…NQNQ. Over residues 1006–1027 the composition is skewed to polar residues; sequence QMSQEQSQNLFNSPHTAPGSSQ.

Efficient DNA binding requires dimerization with another bHLH protein. Forms a heterodimer with Cycle. In terms of tissue distribution, widely expressed. Found in head, body, and appendage fractions.

It is found in the nucleus. Functionally, circadian regulator that acts as a transcription factor and generates a rhythmic output with a period of about 24 hours. Oscillates in antiphase to the cycling observed for period (PER) and timeless (TIM). According to PubMed:9742131, reaches peak abundance within several hours of the dark-light transition at ZT0 (zeitgeber 0), whereas PubMed:9616122 describes bimodal oscillating expression with maximum at ZT5 and ZT23. Clock-cycle heterodimers activate cycling transcription of PER and TIM by binding to the E-box (5'-CACGTG-3') present in their promoters. Once induced, Period and Timeless block Clock's ability to transactivate their promoters. The protein is Circadian locomoter output cycles protein kaput (Clk) of Drosophila melanogaster (Fruit fly).